Consider the following 467-residue polypeptide: 3-isopropylmalate dehydratase large subunit (467 aa).

Residues C349, C409, and C412 each contribute to the [4Fe-4S] cluster site. The segment at 422–443 (PGQRSASTSNRNFEGRQGRGGR) is disordered.

This sequence belongs to the aconitase/IPM isomerase family. LeuC type 1 subfamily. In terms of assembly, heterodimer of LeuC and LeuD. [4Fe-4S] cluster serves as cofactor.

It carries out the reaction (2R,3S)-3-isopropylmalate = (2S)-2-isopropylmalate. It participates in amino-acid biosynthesis; L-leucine biosynthesis; L-leucine from 3-methyl-2-oxobutanoate: step 2/4. Functionally, catalyzes the isomerization between 2-isopropylmalate and 3-isopropylmalate, via the formation of 2-isopropylmaleate. The protein is 3-isopropylmalate dehydratase large subunit of Paramagnetospirillum magneticum (strain ATCC 700264 / AMB-1) (Magnetospirillum magneticum).